The following is a 160-amino-acid chain: Serine-protein kinase RsbW (160 aa).

This sequence belongs to the anti-sigma-factor family.

It carries out the reaction L-seryl-[protein] + ATP = O-phospho-L-seryl-[protein] + ADP + H(+). The catalysed reaction is L-threonyl-[protein] + ATP = O-phospho-L-threonyl-[protein] + ADP + H(+). Negative regulator of sigma-B activity. Phosphorylates and inactivates its specific antagonist protein, RsbV. Upon phosphorylation of RsbV, RsbW is released and binds to sigma-B, thereby blocking its ability to form an RNA polymerase holoenzyme (E-sigma-B). The sequence is that of Serine-protein kinase RsbW from Bacillus cereus (strain AH187).